The primary structure comprises 678 residues: Methionine--tRNA ligase (678 aa).

The 'HIGH' region motif lies at 14–24; that stretch reads PYANGSIHLGH. Residues Cys145, Cys148, Cys158, and Cys161 each contribute to the Zn(2+) site. Residues 331-335 carry the 'KMSKS' region motif; sequence KMSKS. Position 334 (Lys334) interacts with ATP. The tRNA-binding domain occupies 576–678; that stretch reads AFAAVDLRIA…SGAKPGQRVK (103 aa).

It belongs to the class-I aminoacyl-tRNA synthetase family. MetG type 1 subfamily. Homodimer. The cofactor is Zn(2+).

The protein resides in the cytoplasm. The enzyme catalyses tRNA(Met) + L-methionine + ATP = L-methionyl-tRNA(Met) + AMP + diphosphate. Is required not only for elongation of protein synthesis but also for the initiation of all mRNA translation through initiator tRNA(fMet) aminoacylation. The polypeptide is Methionine--tRNA ligase (Pseudomonas aeruginosa (strain UCBPP-PA14)).